A 299-amino-acid chain; its full sequence is Coenzyme PQQ synthesis protein B (299 aa).

The protein belongs to the PqqB family.

Its pathway is cofactor biosynthesis; pyrroloquinoline quinone biosynthesis. In terms of biological role, may be involved in the transport of PQQ or its precursor to the periplasm. This is Coenzyme PQQ synthesis protein B from Xanthomonas oryzae pv. oryzae (strain MAFF 311018).